A 350-amino-acid chain; its full sequence is Heat-inducible transcription repressor HrcA (350 aa).

The protein belongs to the HrcA family.

Its function is as follows. Negative regulator of class I heat shock genes (grpE-dnaK-dnaJ and groELS operons). Prevents heat-shock induction of these operons. In Xanthomonas campestris pv. campestris (strain ATCC 33913 / DSM 3586 / NCPPB 528 / LMG 568 / P 25), this protein is Heat-inducible transcription repressor HrcA.